A 454-amino-acid polypeptide reads, in one-letter code: tRNA modification GTPase MnmE (454 aa).

Residues Arg-26, Glu-84, and Lys-123 each contribute to the (6S)-5-formyl-5,6,7,8-tetrahydrofolate site. The TrmE-type G domain occupies 219-378 (GLQVVIAGKP…LVDAITAHAG (160 aa)). Position 229 (Asn-229) interacts with K(+). GTP-binding positions include 229-234 (NAGKSS), 248-254 (TDIAGTT), and 273-276 (DTAG). Ser-233 provides a ligand contact to Mg(2+). The K(+) site is built by Thr-248, Ile-250, and Thr-253. Thr-254 is a Mg(2+) binding site. Lys-454 serves as a coordination point for (6S)-5-formyl-5,6,7,8-tetrahydrofolate.

It belongs to the TRAFAC class TrmE-Era-EngA-EngB-Septin-like GTPase superfamily. TrmE GTPase family. Homodimer. Heterotetramer of two MnmE and two MnmG subunits. It depends on K(+) as a cofactor.

The protein resides in the cytoplasm. Exhibits a very high intrinsic GTPase hydrolysis rate. Involved in the addition of a carboxymethylaminomethyl (cmnm) group at the wobble position (U34) of certain tRNAs, forming tRNA-cmnm(5)s(2)U34. The protein is tRNA modification GTPase MnmE of Acinetobacter baumannii (strain AYE).